Consider the following 270-residue polypeptide: 3-phenylpropionate-dihydrodiol/cinnamic acid-dihydrodiol dehydrogenase (270 aa).

10–34 is an NAD(+) binding site; it reads FITGGGSGLGLALVERFIEEGAQVA. Ser143 is a binding site for substrate. Tyr156 functions as the Proton acceptor in the catalytic mechanism.

The protein belongs to the short-chain dehydrogenases/reductases (SDR) family.

It carries out the reaction 3-(cis-5,6-dihydroxycyclohexa-1,3-dien-1-yl)propanoate + NAD(+) = 3-(2,3-dihydroxyphenyl)propanoate + NADH + H(+). It catalyses the reaction (2E)-3-(cis-5,6-dihydroxycyclohexa-1,3-dien-1-yl)prop-2-enoate + NAD(+) = (2E)-3-(2,3-dihydroxyphenyl)prop-2-enoate + NADH + H(+). It participates in aromatic compound metabolism; 3-phenylpropanoate degradation. Functionally, converts 3-phenylpropionate-dihydrodiol (PP-dihydrodiol) and cinnamic acid-dihydrodiol (CI-dihydrodiol) into 3-(2,3-dihydroxylphenyl)propanoic acid (DHPP) and 2,3-dihydroxicinnamic acid (DHCI), respectively. The polypeptide is 3-phenylpropionate-dihydrodiol/cinnamic acid-dihydrodiol dehydrogenase (Escherichia coli (strain K12 / MC4100 / BW2952)).